We begin with the raw amino-acid sequence, 265 residues long: MSDILNTILARKADEVAERSARVPLAELIARSADLPLTRGFAAAMQASIAAGDPAVIAEVKKASPSKGVIRPDFHPADIAVSYEFGGATCLSVLTDVDFFQGSDAYLRQARDACTLPVLRKDFTVDPYQVYEARVLGADCILLIVSALKDAQLADLSGLAMQLGLDVLVEVHDVDELERAVQVPVPLIGINNRNLRTFEVTLQTTLDMRAAVPRDRVLVTESGIVTQADVQLMRSNDVNAFLVGETFMRAAEPGESLRQLFFAHD.

The protein belongs to the TrpC family.

It carries out the reaction 1-(2-carboxyphenylamino)-1-deoxy-D-ribulose 5-phosphate + H(+) = (1S,2R)-1-C-(indol-3-yl)glycerol 3-phosphate + CO2 + H2O. The protein operates within amino-acid biosynthesis; L-tryptophan biosynthesis; L-tryptophan from chorismate: step 4/5. This chain is Indole-3-glycerol phosphate synthase, found in Xanthomonas oryzae pv. oryzae (strain MAFF 311018).